The following is a 554-amino-acid chain: Hyaluronan synthase 3 (554 aa).

Topologically, residues Met-1–Ser-15 are cytoplasmic. The chain crosses the membrane as a helical span at residues Leu-16 to Ile-36. The Extracellular segment spans residues His-37 to Ser-44. Residues Phe-45–Leu-65 form a helical membrane-spanning segment. Residues Glu-66–Leu-378 are Cytoplasmic-facing. Residues Trp-379 to Ile-399 traverse the membrane as a helical segment. At Gln-400–Asn-409 the chain is on the extracellular side. A helical membrane pass occupies residues Ile-410–Phe-430. Topologically, residues Leu-431 to Ser-441 are cytoplasmic. Residues Leu-442 to Ile-462 form a helical membrane-spanning segment. N-linked (GlcNAc...) asparagine glycosylation is present at Asn-463. Residues Asn-463–Thr-474 are Extracellular-facing. Residues Ile-475–Gly-495 traverse the membrane as a helical segment. At Leu-496–Ser-516 the chain is on the cytoplasmic side. A helical membrane pass occupies residues Gly-517–Ala-537. The Extracellular segment spans residues Arg-538–Val-554.

It belongs to the NodC/HAS family. Mg(2+) serves as cofactor. O-GlcNAcylation increases the hyaluronan synthase activity, HAS3 stability and its plasma membrane residence. The concentration of UDP-GlcNAc controls the level of O-GlcNAc modification.

Its subcellular location is the cell membrane. The protein localises to the golgi apparatus membrane. It is found in the golgi apparatus. It localises to the trans-Golgi network membrane. The protein resides in the cytoplasmic vesicle. The catalysed reaction is [hyaluronan](n) + UDP-N-acetyl-alpha-D-glucosamine = N-acetyl-beta-D-glucosaminyl-(1-&gt;4)-[hyaluronan](n) + UDP + H(+). It carries out the reaction N-acetyl-beta-D-glucosaminyl-(1-&gt;4)-[hyaluronan](n) + UDP-alpha-D-glucuronate = [hyaluronan](n+1) + UDP + H(+). The protein operates within glycan biosynthesis; hyaluronan biosynthesis. Its function is as follows. Catalyzes the addition of GlcNAc or GlcUA monosaccharides to the nascent hyaluronan polymer. Therefore, it is essential to hyaluronan synthesis a major component of most extracellular matrices that has a structural role in tissues architectures and regulates cell adhesion, migration and differentiation. This is one of three isoenzymes responsible for cellular hyaluronan synthesis. The protein is Hyaluronan synthase 3 (Has3) of Mus musculus (Mouse).